The following is a 170-amino-acid chain: Cathelicidin antimicrobial peptide (170 aa).

The N-terminal stretch at 1–30 (MKTQRDGHSLGRWSLVLLLLGLVMPLAIVA) is a signal peptide. Residues 31 to 131 (QVLSYKEAVL…DISCDKDNKR (101 aa)) constitute a propeptide, cathelin-like domain (CLD). 2 cysteine pairs are disulfide-bonded: cysteine 86/cysteine 97 and cysteine 108/cysteine 125. Residues 150–162 (FKRIVQRIKDFLR) form an active core region.

It belongs to the cathelicidin family. In terms of assembly, monomer, homodimer or homotrimer (in vitro). Oligomerizes as tetra- or hexamer in solution (in vitro). Post-translationally, proteolytically cleaved by proteinase PRTN3 into antibacterial peptide LL-37. Proteolytically cleaved by cathepsin CTSG and neutrophil elastase ELANE. In terms of processing, resistant to proteolytic degradation in solution, and when bound to both zwitterionic (mimicking mammalian membranes) and negatively charged membranes (mimicking bacterial membranes). After secretion onto the skin surface, the CAMP gene product is processed by a serine protease-dependent mechanism into multiple novel antimicrobial peptides distinct from and shorter than cathelicidin LL-37. These peptides show enhanced antimicrobial action, acquiring the ability to kill skin pathogens such as S.aureus, E.coli and C.albicans. These peptides have lost the ability to stimulate CXCL8/IL8 release from keratinocytes. The peptides act synergistically, killing bacteria at lower concentrations when present together, and maintain activity at increased salt condition.

The protein localises to the secreted. Its subcellular location is the vesicle. Functionally, antimicrobial protein that is an integral component of the innate immune system. Binds to bacterial lipopolysaccharides (LPS). Acts via neutrophil N-formyl peptide receptors to enhance the release of CXCL2. Postsecretory processing generates multiple cathelicidin antimicrobial peptides with various lengths which act as a topical antimicrobial defense in sweat on skin. The unprocessed precursor form, cathelicidin antimicrobial peptide, inhibits the growth of Gram-negative E.coli and E.aerogenes with efficiencies comparable to that of the mature peptide LL-37 (in vitro). In terms of biological role, antimicrobial peptide that is an integral component of the innate immune system. Binds to bacterial lipopolysaccharides (LPS). Causes membrane permeabilization by forming transmembrane pores (in vitro). Causes lysis of E.coli. Exhibits antimicrobial activity against Gram-negative bacteria such as P.aeruginosa, S.typhimurium, E.aerogenes, E.coli and P.syringae, Gram-positive bacteria such as L.monocytogenes, S.epidermidis, S.pyogenes and S.aureus, as well as vancomycin-resistant enterococci (in vitro). Exhibits antimicrobial activity against methicillin-resistant S.aureus, P.mirabilis, and C.albicans in low-salt media, but not in media containing 100 mM NaCl (in vitro). Forms chiral supramolecular assemblies with quinolone signal (PQS) molecules of P.aeruginosa, which may lead to interference of bacterial quorum signaling and perturbance of bacterial biofilm formation. May form supramolecular fiber-like assemblies on bacterial membranes. Induces cytokine and chemokine producation as well as TNF/TNFA and CSF2/GMCSF production in normal human keratinocytes. Exhibits hemolytic activity against red blood cells. Exhibits antimicrobial activity against E.coli and B.megaterium (in vitro). This is Cathelicidin antimicrobial peptide from Pan troglodytes (Chimpanzee).